Reading from the N-terminus, the 427-residue chain is Serine hydroxymethyltransferase (427 aa).

Residues L122 and 126 to 128 (GHL) contribute to the (6S)-5,6,7,8-tetrahydrofolate site. Residue K231 is modified to N6-(pyridoxal phosphate)lysine. 355–357 (SPF) contacts (6S)-5,6,7,8-tetrahydrofolate.

It belongs to the SHMT family. In terms of assembly, homodimer. Pyridoxal 5'-phosphate serves as cofactor.

It is found in the cytoplasm. It catalyses the reaction (6R)-5,10-methylene-5,6,7,8-tetrahydrofolate + glycine + H2O = (6S)-5,6,7,8-tetrahydrofolate + L-serine. The protein operates within one-carbon metabolism; tetrahydrofolate interconversion. Its pathway is amino-acid biosynthesis; glycine biosynthesis; glycine from L-serine: step 1/1. In terms of biological role, catalyzes the reversible interconversion of serine and glycine with tetrahydrofolate (THF) serving as the one-carbon carrier. This reaction serves as the major source of one-carbon groups required for the biosynthesis of purines, thymidylate, methionine, and other important biomolecules. Also exhibits THF-independent aldolase activity toward beta-hydroxyamino acids, producing glycine and aldehydes, via a retro-aldol mechanism. This is Serine hydroxymethyltransferase from Synechococcus sp. (strain ATCC 27144 / PCC 6301 / SAUG 1402/1) (Anacystis nidulans).